A 606-amino-acid polypeptide reads, in one-letter code: NADH-ubiquinone oxidoreductase chain 5 (606 aa).

The next 16 membrane-spanning stretches (helical) occupy residues 4–24 (FSSLMLASLSVLTLPIMSSIL), 38–58 (NIISYAFITSLIPTMMFIHSG), 87–107 (MIFVPVALFVTWSIMEFSLWY), 117–137 (FFKYLLTFLITMMILVTANNL), 140–160 (LFIGWEGVGIMSFLLIGWWYG), 171–191 (AILYNRIGDIGFIMAMAWFLF), 211–233 (LPLLGLLLAATGKSAQFGLHPWL), 241–261 (TPVSALLHSSTMVVAGVFLLI), 273–293 (IQSLTLCLGAITTLFTAICAL), 301–320 (IIAFSTSSQLGLMIVTIGIN), 325–347 (AFLHICTHAFFKAMLFMCSGSII), 366–386 (MPFTTTSLIIGSLALTGMPFL), 413–433 (LIATSLTAVYSTRIIFFALLG), 457–477 (LLIGSIFAGFFISNNIYPTTI), 488–508 (LTALTVTILGFTLALELSLIT), and 584–604 (IKLYFLSFLITLTLSMLLFNL).

Belongs to the complex I subunit 5 family. As to quaternary structure, core subunit of respiratory chain NADH dehydrogenase (Complex I) which is composed of 45 different subunits.

Its subcellular location is the mitochondrion inner membrane. It catalyses the reaction a ubiquinone + NADH + 5 H(+)(in) = a ubiquinol + NAD(+) + 4 H(+)(out). In terms of biological role, core subunit of the mitochondrial membrane respiratory chain NADH dehydrogenase (Complex I) which catalyzes electron transfer from NADH through the respiratory chain, using ubiquinone as an electron acceptor. Essential for the catalytic activity and assembly of complex I. The polypeptide is NADH-ubiquinone oxidoreductase chain 5 (MT-ND5) (Equus asinus (Donkey)).